The chain runs to 352 residues: Histidinol-phosphate aminotransferase (352 aa).

Lysine 221 bears the N6-(pyridoxal phosphate)lysine mark.

Belongs to the class-II pyridoxal-phosphate-dependent aminotransferase family. Histidinol-phosphate aminotransferase subfamily. In terms of assembly, homodimer. Pyridoxal 5'-phosphate serves as cofactor.

The catalysed reaction is L-histidinol phosphate + 2-oxoglutarate = 3-(imidazol-4-yl)-2-oxopropyl phosphate + L-glutamate. The protein operates within amino-acid biosynthesis; L-histidine biosynthesis; L-histidine from 5-phospho-alpha-D-ribose 1-diphosphate: step 7/9. In Staphylococcus aureus (strain MSSA476), this protein is Histidinol-phosphate aminotransferase.